The primary structure comprises 207 residues: Guanylate kinase (207 aa).

The region spanning 4-184 (GTLYIVSAPS…ALSDLKTIIR (181 aa)) is the Guanylate kinase-like domain. Residue 11–18 (APSGAGKS) participates in ATP binding.

The protein belongs to the guanylate kinase family.

It localises to the cytoplasm. It catalyses the reaction GMP + ATP = GDP + ADP. Essential for recycling GMP and indirectly, cGMP. This is Guanylate kinase (gmk) from Salmonella typhimurium (strain LT2 / SGSC1412 / ATCC 700720).